The chain runs to 390 residues: Homoserine O-acetyltransferase (390 aa).

In terms of domain architecture, AB hydrolase-1 spans 55-366 (NAILINHAFS…ESDCGHDAFL (312 aa)). The Nucleophile role is filled by Ser163. Arg232 provides a ligand contact to substrate. Catalysis depends on residues Asp329 and His362. Asp363 contacts substrate.

The protein belongs to the AB hydrolase superfamily. MetX family. Homodimer.

The protein localises to the cytoplasm. The catalysed reaction is L-homoserine + acetyl-CoA = O-acetyl-L-homoserine + CoA. Its pathway is amino-acid biosynthesis; L-methionine biosynthesis via de novo pathway; O-acetyl-L-homoserine from L-homoserine: step 1/1. In terms of biological role, transfers an acetyl group from acetyl-CoA to L-homoserine, forming acetyl-L-homoserine. In Desulfotalea psychrophila (strain LSv54 / DSM 12343), this protein is Homoserine O-acetyltransferase.